The following is a 727-amino-acid chain: Synaptic vesicle glycoprotein 2C (727 aa).

Residues 1 to 57 are interaction with SYT1; sequence MEDSYKDRTSLMKGAKDIAKEVKKQTVKKVNQAVDRAQDEYTQRSYSRFQDEDDDDD. Residues 1–154 lie on the Cytoplasmic side of the membrane; sequence MEDSYKDRTS…CGHGRFQWAL (154 aa). Residues 22 to 120 form a disordered region; it reads VKKQTVKKVN…QPKGDEYKDR (99 aa). Residues Ser-75 and Ser-76 each carry the phosphoserine modification. At Thr-79 the chain carries Phosphothreonine. Residues 155–175 traverse the membrane as a helical segment; that stretch reads FFVLGMALMADGVEVFVVGFV. Residues 176–191 lie on the Extracellular side of the membrane; sequence LPSAETDLCIPNSGSG. Residues 192-212 form a helical membrane-spanning segment; it reads WLGSIVYLGMMVGAFFWGGLA. The Cytoplasmic segment spans residues 213 to 226; sequence DKVGRKQSLLICMS. A helical transmembrane segment spans residues 227 to 247; it reads VNGFFAFLSSFVQGYGFFLLC. Arg-248 is a topological domain (extracellular). A helical membrane pass occupies residues 249-269; the sequence is LLSGFGIGGAIPTVFSYFAEV. The Cytoplasmic portion of the chain corresponds to 270-280; sequence LAREKRGEHLS. Residues 281–301 traverse the membrane as a helical segment; the sequence is WLCMFWMIGGIYASAMAWAII. Residues 302-320 lie on the Extracellular side of the membrane; the sequence is PHYGWSFSMGSAYQFHSWR. The chain crosses the membrane as a helical span at residues 321 to 341; sequence VFVIVCALPCVSSVVALTFMP. Residues 342–437 are Cytoplasmic-facing; that stretch reads ESPRFLLEVG…PVRENTIKLT (96 aa). A helical transmembrane segment spans residues 438–458; it reads IVWFTLSFGYYGLSVWFPDVI. The Extracellular portion of the chain corresponds to 459-578; that stretch reads KHLQSDEYAL…CQITFDDDYS (120 aa). At Tyr-466 the chain carries Phosphotyrosine. N-linked (GlcNAc...) asparagine glycans are attached at residues Asn-480, Asn-484, Asn-534, Asn-559, and Asn-565. The tract at residues 529–566 is (Microbial infection) C.botulinum neurotoxin type A-binding; it reads NTYFKNCTFIDTLFENTDFEPYKFIDSEFQNCSFLHNK. Residues 579–599 form a helical membrane-spanning segment; the sequence is AYWIYFVNFLGTLAVLPGNIV. Over 600–609 the chain is Cytoplasmic; the sequence is SALLMDRIGR. A helical transmembrane segment spans residues 610–630; it reads LTMLGGSMVLSGISCFFLWFG. At 631-636 the chain is on the extracellular side; it reads TSESMM. The helical transmembrane segment at 637–657 threads the bilayer; the sequence is IGMLCLYNGLTISAWNSLDVV. At 658–670 the chain is on the cytoplasmic side; sequence TVELYPTDRRATG. A helical transmembrane segment spans residues 671–693; it reads FGFLNALCKAAAVLGNLIFGSLV. At 694–697 the chain is on the extracellular side; the sequence is SITK. Residues 698–716 form a helical membrane-spanning segment; sequence AIPILLASTVLVCGGLVGL. The Cytoplasmic segment spans residues 717–727; that stretch reads RLPDTRTQVLM.

It belongs to the major facilitator superfamily. In terms of assembly, interacts with SYT1 in a calcium-dependent manner. As to quaternary structure, (Microbial infection) Interacts with C.botulinum neurotoxin type A (BoNT/A, botA). (Microbial infection) Interacts with C.botulinum neurotoxin type F (BoNT/F). Interaction requires glycosylation of SV2 proteins. In terms of processing, N-glycosylated. As to expression, expressed at high levels in very few brain areas including the striatum, midbrain and hindbrain, and in the olfactory bulb. Expressed at lower levels in cerebrum, hippocampus and cerebellum (at protein level). Mainly expressed in brain; also detected in lung, liver, kidney.

The protein resides in the cytoplasmic vesicle. Its subcellular location is the secretory vesicle. It is found in the synaptic vesicle membrane. Functionally, plays a role in the control of regulated secretion in neural and endocrine cells, enhancing selectively low-frequency neurotransmission. Positively regulates vesicle fusion by maintaining the readily releasable pool of secretory vesicles. (Microbial infection) Receptor for C.botulinum neurotoxin type A (BoNT/A, botA); the toxin binds Sv2c via extracellular loop 4. Restores uptake of BoNT/A in rat cells that are deleted for SV2 receptor. In terms of biological role, (Microbial infection) Possible receptor for C.botulinum neurotoxin type D (BoNT/D, botD); BoNT/D does not bind to extracellular loop 4 as do BoNT/A and BoNT/E. Another group does not find a convincing interaction with SV2. Its function is as follows. (Microbial infection) Receptor for C.botulinum neurotoxin type F (BoNT/F); binding requires glycosylation of Asn-573. The sequence is that of Synaptic vesicle glycoprotein 2C (Sv2c) from Rattus norvegicus (Rat).